A 500-amino-acid polypeptide reads, in one-letter code: NAD(P)H-quinone oxidoreductase chain 4, chloroplastic (500 aa).

The next 15 helical transmembrane spans lie at 3 to 23 (FFPWLTIIVILPIFAGSIILF), 37 to 57 (ICICILELLLTTYAFCYHFQL), 87 to 107 (IGPILLTGFITTLATLAAWPV), 113 to 130 (LFHFLMLAMYSGQIGLFA), 134 to 154 (LLLFFIMWELELIPVYLLLSM), 167 to 187 (FILYTAGGSVFLLMGVLGVGL), 208 to 228 (ALEIILYIGFFIAFAVKSPII), 242 to 262 (HYSTCMLLAGILLKMGAYGLI), 272 to 292 (AHSIFSPWLVIVGTIQIIYAA), 305 to 325 (IAYSSVSHMGFILIGIGSIND), 330 to 350 (GAILQIVSHGFIGAALFFLAG), 364 to 384 (MGGIAIPMPKIFTMFSSFSMA), 386 to 406 (LALPGMSGFVAEFIVFFGIIT), 411 to 431 (LLISKLGITFVMAIGIILTPI), and 462 to 482 (LFVSIAIFIPVIGIGMYPDFV).

The protein belongs to the complex I subunit 4 family.

It is found in the plastid. It localises to the chloroplast thylakoid membrane. The catalysed reaction is a plastoquinone + NADH + (n+1) H(+)(in) = a plastoquinol + NAD(+) + n H(+)(out). It carries out the reaction a plastoquinone + NADPH + (n+1) H(+)(in) = a plastoquinol + NADP(+) + n H(+)(out). The protein is NAD(P)H-quinone oxidoreductase chain 4, chloroplastic of Daucus carota (Wild carrot).